Reading from the N-terminus, the 151-residue chain is MELDIKAIMERLPHRYPMLLVDRVLDIVPGKSIVAIKNVSINEPFFEGHFPHHPVMPGVLITEAMAQAAALFSFTDDDGGLKCDSAKTAYYLVGIDEARFRRPVVPGDQLRLEVQAERLSRAICKYQARALVDGQIVAEAKLMCAIRSLEA.

Histidine 49 is an active-site residue.

It belongs to the thioester dehydratase family. FabZ subfamily.

It is found in the cytoplasm. The enzyme catalyses a (3R)-hydroxyacyl-[ACP] = a (2E)-enoyl-[ACP] + H2O. Its function is as follows. Involved in unsaturated fatty acids biosynthesis. Catalyzes the dehydration of short chain beta-hydroxyacyl-ACPs and long chain saturated and unsaturated beta-hydroxyacyl-ACPs. This is 3-hydroxyacyl-[acyl-carrier-protein] dehydratase FabZ from Bordetella petrii (strain ATCC BAA-461 / DSM 12804 / CCUG 43448).